A 321-amino-acid chain; its full sequence is Glucokinase (321 aa).

8–13 is a binding site for ATP; the sequence is GDVGGT.

This sequence belongs to the bacterial glucokinase family.

It localises to the cytoplasm. It catalyses the reaction D-glucose + ATP = D-glucose 6-phosphate + ADP + H(+). The polypeptide is Glucokinase (Escherichia coli O127:H6 (strain E2348/69 / EPEC)).